The chain runs to 466 residues: Asparagine--tRNA ligase (466 aa).

Belongs to the class-II aminoacyl-tRNA synthetase family. Homodimer.

The protein resides in the cytoplasm. The catalysed reaction is tRNA(Asn) + L-asparagine + ATP = L-asparaginyl-tRNA(Asn) + AMP + diphosphate + H(+). The chain is Asparagine--tRNA ligase from Photobacterium profundum (strain SS9).